The following is a 127-amino-acid chain: MORF4 family-associated protein 1 (127 aa).

The disordered stretch occupies residues 76 to 97 (ESALNHLQNPDDGAEGRGTKRC). The stretch at 92–126 (RGTKRCEKAEEKAKEIAKMAEMLVELVRRIEKSES) forms a coiled coil.

It belongs to the MORF4 family-associated protein family. In terms of assembly, found in a complex composed of MORF4L1, MRFAP1 and RB1. Interacts via its N-terminus with MORF4L1. Interacts with CSTB and MORF4L2.

Its subcellular location is the nucleus. It localises to the cytoplasm. It is found in the perinuclear region. The chain is MORF4 family-associated protein 1 from Bos taurus (Bovine).